A 240-amino-acid polypeptide reads, in one-letter code: 2,3,4,5-tetrahydropyridine-2,6-dicarboxylate N-acetyltransferase (240 aa).

This sequence belongs to the transferase hexapeptide repeat family. DapH subfamily.

The catalysed reaction is (S)-2,3,4,5-tetrahydrodipicolinate + acetyl-CoA + H2O = L-2-acetamido-6-oxoheptanedioate + CoA. Its pathway is amino-acid biosynthesis; L-lysine biosynthesis via DAP pathway; LL-2,6-diaminopimelate from (S)-tetrahydrodipicolinate (acetylase route): step 1/3. In terms of biological role, catalyzes the transfer of an acetyl group from acetyl-CoA to tetrahydrodipicolinate. The chain is 2,3,4,5-tetrahydropyridine-2,6-dicarboxylate N-acetyltransferase from Staphylococcus epidermidis (strain ATCC 12228 / FDA PCI 1200).